Reading from the N-terminus, the 435-residue chain is Amino acid transporter AVT6C (435 aa).

Positions 1–24 are disordered; it reads MTPQIKTHLLPKQEPSSSENHGSS. Transmembrane regions (helical) follow at residues 28–48, 53–73, 100–120, 148–168, 181–201, 219–239, 260–280, 307–327, 354–374, 375–395, and 408–428; these read IVFN…PAAF, IVPA…SVGF, IAVQ…FSII, WNTR…PLVL, VSFL…ISAL, GSFW…TFHF, ISVI…YLLF, IVRL…NFSL, LALL…WYFF, QFMG…AIVL, and IVAA…ISTN.

The protein belongs to the amino acid/polyamine transporter 2 family. Amino acid/auxin permease (AAAP) (TC 2.A.18.6) subfamily.

The protein resides in the membrane. This chain is Amino acid transporter AVT6C, found in Arabidopsis thaliana (Mouse-ear cress).